The sequence spans 638 residues: 1-deoxy-D-xylulose-5-phosphate synthase (638 aa).

Residues H79 and 120–122 each bind thiamine diphosphate; that span reads GHS. D151 contributes to the Mg(2+) binding site. Residues 152–153, N182, Y291, and E373 contribute to the thiamine diphosphate site; that span reads GA. Mg(2+) is bound at residue N182.

It belongs to the transketolase family. DXPS subfamily. As to quaternary structure, homodimer. Requires Mg(2+) as cofactor. The cofactor is thiamine diphosphate.

The enzyme catalyses D-glyceraldehyde 3-phosphate + pyruvate + H(+) = 1-deoxy-D-xylulose 5-phosphate + CO2. It functions in the pathway metabolic intermediate biosynthesis; 1-deoxy-D-xylulose 5-phosphate biosynthesis; 1-deoxy-D-xylulose 5-phosphate from D-glyceraldehyde 3-phosphate and pyruvate: step 1/1. In terms of biological role, catalyzes the acyloin condensation reaction between C atoms 2 and 3 of pyruvate and glyceraldehyde 3-phosphate to yield 1-deoxy-D-xylulose-5-phosphate (DXP). The polypeptide is 1-deoxy-D-xylulose-5-phosphate synthase (Xanthomonas euvesicatoria pv. vesicatoria (strain 85-10) (Xanthomonas campestris pv. vesicatoria)).